The primary structure comprises 373 residues: MTQPIVRSIPLHVVSNDHPSSSPLQPGVKQSGEDKIGRSPVQFADVPVLRKPSWIRVRIPSGNAVQSLKAKLRENRLVTVCEEAACPNIHECFSHGTATFMILGEVCTRRCSFCDVAHGRPKPPDPEEPISLARTVAEMGLKYVVVTSVDRDDLRDGGAQHFVDCIAAIRQSAPQTRIEILTPDFRGKGRMDRALDILAACPPDVFNHNVETVPALYPNVRPGADYQWSLTLLKRFKAQHPQVPTKSGIMLGLGETLDQVQATLRDLRAHDVDMVTIGQYLQPTSHHHPVLRYWTPDEYKALEEYGMALGFSHVASGPMVRSSYHADHQAKEAGLGFNATVSLGSPAVSSTEHRERHTIASKSASKTESIRHR.

Positions 12-36 (HVVSNDHPSSSPLQPGVKQSGEDKI) are disordered. [4Fe-4S] cluster contacts are provided by Cys81, Cys86, Cys92, Cys107, Cys111, Cys114, and Ser323. A Radical SAM core domain is found at 93 to 312 (FSHGTATFMI…EEYGMALGFS (220 aa)). Residues 346–373 (PAVSSTEHRERHTIASKSASKTESIRHR) form a disordered region.

It belongs to the radical SAM superfamily. Lipoyl synthase family. [4Fe-4S] cluster is required as a cofactor.

The protein localises to the cytoplasm. The enzyme catalyses [[Fe-S] cluster scaffold protein carrying a second [4Fe-4S](2+) cluster] + N(6)-octanoyl-L-lysyl-[protein] + 2 oxidized [2Fe-2S]-[ferredoxin] + 2 S-adenosyl-L-methionine + 4 H(+) = [[Fe-S] cluster scaffold protein] + N(6)-[(R)-dihydrolipoyl]-L-lysyl-[protein] + 4 Fe(3+) + 2 hydrogen sulfide + 2 5'-deoxyadenosine + 2 L-methionine + 2 reduced [2Fe-2S]-[ferredoxin]. Its pathway is protein modification; protein lipoylation via endogenous pathway; protein N(6)-(lipoyl)lysine from octanoyl-[acyl-carrier-protein]: step 2/2. Its function is as follows. Catalyzes the radical-mediated insertion of two sulfur atoms into the C-6 and C-8 positions of the octanoyl moiety bound to the lipoyl domains of lipoate-dependent enzymes, thereby converting the octanoylated domains into lipoylated derivatives. The chain is Lipoyl synthase from Xylella fastidiosa (strain 9a5c).